Reading from the N-terminus, the 469-residue chain is MPRLLDRQTPVHFIGVGGIGMSALARILVDRGHSVSGSDPRDNATTQQLKTLGVKVFRQQDATCIDAVTGRTAADSPVVVISTAIPESNPELQRARQQGLEIWHRSDLLAALIEQQPSIAVAGSHGKTTTSTLITTLLLEADQDPTAVIGGIVPSLGSNGHSGQGKLLVAEADESDGSLVKFSPSLGVITNLELDHTDHYSCLDDLISTLQRFAGGCDRVLANHDCPILQEHFQPTAWWSNQSDESVDFAALPLSLDGDRCVARFYEAGQPVGDFTLPMAGLHNLSNATGALAACRMEGLPFNQLVEGLAGLKAPGRRFDLRGTWKGRHIVDDYAHHPSEVQATLEMARLMVRSGRSPLPSAPQRLLAVFQPHRYSRTRQFLDGFAKALQNCDLLLLAPVYPAGEQPLQGISSNALADRVRKLKPDLEIAVAENLDQLTELVIQHSLENDLVLAMGAGDVNGLWSRLTS.

Gly-123–Thr-129 contributes to the ATP binding site.

This sequence belongs to the MurCDEF family.

It localises to the cytoplasm. It carries out the reaction UDP-N-acetyl-alpha-D-muramate + L-alanine + ATP = UDP-N-acetyl-alpha-D-muramoyl-L-alanine + ADP + phosphate + H(+). The protein operates within cell wall biogenesis; peptidoglycan biosynthesis. In terms of biological role, cell wall formation. This chain is UDP-N-acetylmuramate--L-alanine ligase, found in Synechococcus sp. (strain CC9605).